A 225-amino-acid chain; its full sequence is Urease accessory protein UreG (225 aa).

The interval 1 to 21 (MHLDHHHESAAAVSADARRPD) is disordered. Residue 33–40 (GPVGSGKT) participates in GTP binding.

The protein belongs to the SIMIBI class G3E GTPase family. UreG subfamily. Homodimer. UreD, UreF and UreG form a complex that acts as a GTP-hydrolysis-dependent molecular chaperone, activating the urease apoprotein by helping to assemble the nickel containing metallocenter of UreC. The UreE protein probably delivers the nickel.

It is found in the cytoplasm. Functionally, facilitates the functional incorporation of the urease nickel metallocenter. This process requires GTP hydrolysis, probably effectuated by UreG. The sequence is that of Urease accessory protein UreG from Streptomyces coelicolor (strain ATCC BAA-471 / A3(2) / M145).